A 335-amino-acid chain; its full sequence is Putative serine/threonine-protein kinase 040L (335 aa).

Residues 33–329 (YYYQEFHDEG…DRLTELHHHL (297 aa)) enclose the Protein kinase domain. Residues 39-47 (HDEGGYGSI) and lysine 62 each bind ATP. Aspartate 196 serves as the catalytic Proton acceptor.

The protein belongs to the protein kinase superfamily. Ser/Thr protein kinase family.

The chain is Putative serine/threonine-protein kinase 040L from Invertebrate iridescent virus 3 (IIV-3).